The sequence spans 131 residues: Small ribosomal subunit protein uS8 (131 aa).

This sequence belongs to the universal ribosomal protein uS8 family. In terms of assembly, part of the 30S ribosomal subunit. Contacts proteins S5 and S12.

Its function is as follows. One of the primary rRNA binding proteins, it binds directly to 16S rRNA central domain where it helps coordinate assembly of the platform of the 30S subunit. In Laribacter hongkongensis (strain HLHK9), this protein is Small ribosomal subunit protein uS8.